A 785-amino-acid polypeptide reads, in one-letter code: Cadherin-7 (785 aa).

The first 27 residues, 1 to 27 (MKLGKVEFCHFLQLIALFLCFSGMSQA), serve as a signal peptide directing secretion. Residues 28 to 47 (ELSRSRSKPYFQSGRSRTKR) constitute a propeptide that is removed on maturation. The Extracellular portion of the chain corresponds to 28-607 (ELSRSRSKPY…AYVLPAGLST (580 aa)). 5 Cadherin domains span residues 49–153 (WVWN…EPKF), 154–262 (LDGP…PPRF), 263–377 (PRRS…PPVF), 378–482 (SSPL…APEF), and 482–599 (FAMD…AEAY). Residues asparagine 449 and asparagine 530 are each glycosylated (N-linked (GlcNAc...) asparagine). Residues 608-628 (GALIAILACVLTLLVLILLIV) traverse the membrane as a helical segment. Over 629–785 (TMRRRKKEPL…YGTGQESLYS (157 aa)) the chain is Cytoplasmic.

It is found in the cell membrane. Its function is as follows. Cadherins are calcium-dependent cell adhesion proteins. They preferentially interact with themselves in a homophilic manner in connecting cells; cadherins may thus contribute to the sorting of heterogeneous cell types. The chain is Cadherin-7 (CDH7) from Homo sapiens (Human).